A 421-amino-acid polypeptide reads, in one-letter code: ATP-dependent RNA helicase RhlB (421 aa).

The Q motif signature appears at 9 to 37 (QKFSDFALHPQVVEALEKKGFYNCTPIQA). In terms of domain architecture, Helicase ATP-binding spans 40–219 (LPLTLAGRDV…FEQMNNAEYV (180 aa)). ATP is bound at residue 53–60 (AQTGTGKT). Positions 165 to 168 (DEAD) match the DEAD box motif. The region spanning 245 to 390 (RLLQTLIEEE…VSKYNPEALM (146 aa)) is the Helicase C-terminal domain. The interval 396–421 (PLRLTRSRPGNGPRRAGAPRNRRRSG) is disordered. Positions 402-414 (SRPGNGPRRAGAP) are enriched in low complexity.

This sequence belongs to the DEAD box helicase family. RhlB subfamily. As to quaternary structure, component of the RNA degradosome, which is a multiprotein complex involved in RNA processing and mRNA degradation.

It is found in the cytoplasm. It catalyses the reaction ATP + H2O = ADP + phosphate + H(+). Its function is as follows. DEAD-box RNA helicase involved in RNA degradation. Has RNA-dependent ATPase activity and unwinds double-stranded RNA. The polypeptide is ATP-dependent RNA helicase RhlB (Salmonella agona (strain SL483)).